We begin with the raw amino-acid sequence, 412 residues long: MPLFLYMVLLVLGIHCVQPNISEGKVTSCLSPQQNATLHKMSSINADFAFNLYRRFAVETPDQNIFFSPVSISAALAMLSFGACSSTQTQILESLGYNLTEMPMAEIQQGFQHLICSLNFPKKELELQMGNALFIEKQLKPLAKFLDDVKNLYETEVFSTDFSNVSAAQQELNSHVERQTKGKIVGLIPDLKPNTIMVLVNYICFKAQWANPFDPSKTEEGSSFLVDKTTTVQVPMMHQMEQYYHLVDTELNCTVLQMDYSKNALALFVLPNEGQMEWVEGAMSSKILKKWNRLLQKGWIDLFVPKFSMSATYDLGDILLKMGIQDAFADNADFSGLTKDNGLKLSNAAHKAVLNIGEKGTEAIPEVTFLNQPKITLLHPIIQFDRSFLLLILEKSTRSILFLGKVVDPTEA.

The N-terminal stretch at 1–16 (MPLFLYMVLLVLGIHC) is a signal peptide. 5 N-linked (GlcNAc...) asparagine glycosylation sites follow: N20, N35, N98, N164, and N252. Residues N292 and K395 each coordinate thyroxine.

Belongs to the serpin family. In terms of tissue distribution, expressed by the liver and secreted in plasma.

It localises to the secreted. Major thyroid hormone transport protein in serum. The sequence is that of Thyroxine-binding globulin (SERPINA7) from Sus scrofa (Pig).